An 85-amino-acid chain; its full sequence is Oxytocin-neurophysin 1 (85 aa).

At Gly3 the chain carries Glycine amide. Cystine bridges form between Cys16–Cys60, Cys19–Cys33, Cys27–Cys50, Cys34–Cys40, Cys67–Cys79, and Cys80–Cys85.

It belongs to the vasopressin/oxytocin family. Interacts with oxytocin receptor (Ki=1.5 nM). Interacts with vasopressin V1aR/AVPR1A (Ki=37 nM), V1bR/AVPR1B (Ki=222 nM), and V2R/AVPR2 receptors (Ki=823 nM).

In terms of biological role, neurophysin 1 specifically binds oxytocin. Its function is as follows. Oxytocin causes contraction of the smooth muscle of the uterus and of the mammary gland. Acts by binding to oxytocin receptor (OXTR). This is Oxytocin-neurophysin 1 (OXT) from Papio hamadryas (Hamadryas baboon).